The following is a 94-amino-acid chain: MEWKGRVLVQLLMLVCVLEVSLCQHWSYGWLPGGKRSVGEVEATIRMMDGGDTLLSIPADTPMEQLSPIHIMNEVDAEGFPLKEQRFPNRRGRM.

Residues 1-23 form the signal peptide; sequence MEWKGRVLVQLLMLVCVLEVSLC. Gln-24 carries the pyrrolidone carboxylic acid modification. Residue Gly-33 is modified to Glycine amide.

This sequence belongs to the GnRH family.

Its subcellular location is the secreted. Functionally, stimulates the secretion of gonadotropins. The sequence is that of Progonadoliberin-3 (gnrh3) from Rutilus rutilus (Roach).